The sequence spans 149 residues: Calmodulin-1 (149 aa).

Alanine 2 bears the N-acetylalanine mark. EF-hand domains lie at 8–43, 44–79, 81–116, and 117–149; these read DQIS…LGQN, PTEA…KMKD, DSEE…LGEK, and LTDE…MMAK. The Ca(2+) site is built by aspartate 21, aspartate 23, aspartate 25, cysteine 27, glutamate 32, aspartate 57, aspartate 59, asparagine 61, threonine 63, glutamate 68, aspartate 94, aspartate 96, asparagine 98, and glutamate 105. Residue lysine 116 is modified to N6,N6,N6-trimethyllysine. Ca(2+) contacts are provided by aspartate 130, aspartate 132, aspartate 134, glutamine 136, and glutamate 141.

The protein belongs to the calmodulin family.

Calmodulin mediates the control of a large number of enzymes, ion channels and other proteins by Ca(2+). Among the enzymes to be stimulated by the calmodulin-Ca(2+) complex are a number of protein kinases and phosphatases. The chain is Calmodulin-1 (CAM81) from Petunia hybrida (Petunia).